The primary structure comprises 194 residues: Cation channel sperm-associated auxiliary subunit zeta (194 aa).

In terms of assembly, component of the CatSper complex or CatSpermasome composed of the core pore-forming members CATSPER1, CATSPER2, CATSPER3 and CATSPER4 as well as auxiliary members CATSPERB, CATSPERG2, CATSPERD, CATSPERE, CATSPERZ, C2CD6/CATSPERT, SLCO6C1, TMEM249, TMEM262 and EFCAB9. HSPA1 may be an additional auxiliary complex member. The core complex members CATSPER1, CATSPER2, CATSPER3 and CATSPER4 form a heterotetrameric channel. The auxiliary CATSPERB, CATSPERG2, CATSPERD and CATSPERE subunits form a pavilion-like structure over the pore which stabilizes the complex through interactions with CATSPER4, CATSPER3, CATSPER1 and CATSPER2 respectively. SLCO6C1 interacts with CATSPERE and TMEM262/CATSPERH interacts with CATSPERB, further stabilizing the complex. C2CD6/CATSPERT interacts at least with CATSPERD and is required for targeting the CatSper complex in the flagellar membrane. Interacts with EFCAB9; the interaction is direct, Ca(2+)-dependent and connects EFCAB9 with the CatSper complex. Dissociates from EFCAB9 at elevated pH. Testis-specific. Expressed in adult but not in fetal testis. Not expressed in ovary. Within testis, expression is restricted to spermatids.

The protein localises to the cell projection. The protein resides in the cilium. It localises to the flagellum membrane. Auxiliary component of the CatSper complex, a complex involved in sperm cell hyperactivation. Sperm cell hyperactivation is needed for sperm motility which is essential late in the preparation of sperm for fertilization. Required for a distribution of the CatSper complex in linear quadrilateral nanodomains along the flagellum, maximizing fertilization inside the mammalian female reproductive tract. Together with EFCAB9, associates with the CatSper channel pore and is required for the two-row structure of each single CatSper channel. The protein is Cation channel sperm-associated auxiliary subunit zeta of Mus musculus (Mouse).